The primary structure comprises 76 residues: Antimicrobial peptide lumbricin-1 (76 aa).

A propeptide spans Met1–Thr14 (removed in mature form).

Displays antimicrobial activity against the Gram-positive bacteria B.subtilis ATCC 62037, S.aureus ATCC 15752 and S.mutans ATCC 25175, the Gram-negative bacteria E.coli ATCC 27325, P.putida ATCC 17426 and Serratia sp. ATCC 21074, and the fungi C.albicans ATCC 10231, C.neoformans ATCC 34881 and S.cerevisiae ATCC 44774. Does not possess hemolytic activity. The protein is Antimicrobial peptide lumbricin-1 of Lumbricus rubellus (Humus earthworm).